The chain runs to 351 residues: Phosphoribosylformylglycinamidine cyclo-ligase (351 aa).

Belongs to the AIR synthase family.

Its subcellular location is the cytoplasm. It carries out the reaction 2-formamido-N(1)-(5-O-phospho-beta-D-ribosyl)acetamidine + ATP = 5-amino-1-(5-phospho-beta-D-ribosyl)imidazole + ADP + phosphate + H(+). The protein operates within purine metabolism; IMP biosynthesis via de novo pathway; 5-amino-1-(5-phospho-D-ribosyl)imidazole from N(2)-formyl-N(1)-(5-phospho-D-ribosyl)glycinamide: step 2/2. The chain is Phosphoribosylformylglycinamidine cyclo-ligase from Synechococcus sp. (strain JA-3-3Ab) (Cyanobacteria bacterium Yellowstone A-Prime).